Here is a 172-residue protein sequence, read N- to C-terminus: Myosin regulatory light chain 2, smooth muscle major isoform (172 aa).

Residues 1–16 (MSSKRAKAKTTKKRPQ) are compositionally biased toward basic residues. Residues 1 to 20 (MSSKRAKAKTTKKRPQRATS) are disordered. At S2 the chain carries N-acetylserine. EF-hand domains follow at residues 29-64 (SQIQEFKEAFNMIDQNRDGFIDKEDLHDMLASMGKN), 98-133 (DPEDVIRNAFACFDEEASGFIHEDHLRELLTTMGDR), and 134-169 (FTDEEVDEMYREAPIDKKGNFNYVEFTRILKHGAKD). Positions 42, 44, 46, and 53 each coordinate Ca(2+).

In terms of assembly, myosin is a hexamer of 2 heavy chains and 4 light chains.

Functionally, myosin regulatory subunit that plays an important role in regulation of both smooth muscle and nonmuscle cell contractile activity. Implicated in cytokinesis, receptor capping, and cell locomotion. The chain is Myosin regulatory light chain 2, smooth muscle major isoform from Gallus gallus (Chicken).